The chain runs to 637 residues: 3D-(3,5/4)-trihydroxycyclohexane-1,2-dione hydrolase (637 aa).

Thiamine diphosphate is bound at residue E65. A thiamine pyrophosphate binding region spans residues 441 to 521 (SLPGDLQRLW…INVLLFDNSG (81 aa)). 2 residues coordinate Mg(2+): D492 and N519.

The protein belongs to the TPP enzyme family. The cofactor is Mg(2+). It depends on thiamine diphosphate as a cofactor.

The catalysed reaction is 3D-3,5/4-trihydroxycyclohexane-1,2-dione + H2O = 5-deoxy-D-glucuronate + H(+). It participates in polyol metabolism; myo-inositol degradation into acetyl-CoA; acetyl-CoA from myo-inositol: step 3/7. Its function is as follows. Involved in the cleavage of the C1-C2 bond of 3D-(3,5/4)-trihydroxycyclohexane-1,2-dione (THcHDO) to yield 5-deoxy-glucuronate (5DG). The protein is 3D-(3,5/4)-trihydroxycyclohexane-1,2-dione hydrolase of Halalkalibacterium halodurans (strain ATCC BAA-125 / DSM 18197 / FERM 7344 / JCM 9153 / C-125) (Bacillus halodurans).